Here is a 335-residue protein sequence, read N- to C-terminus: Erlin-2 (335 aa).

Over 1–2 (MS) the chain is Cytoplasmic. The helical transmembrane segment at 3 to 23 (HAGAIAAIGVALIAAALFSAI) threads the bilayer. Residues 24-335 (HKIEEGHVGV…ALNEPAVGDE (312 aa)) are Lumenal-facing. N-linked (GlcNAc...) asparagine glycosylation occurs at N106. Positions 310–321 (AGPSVQSATLLQ) are enriched in polar residues. Positions 310–335 (AGPSVQSATLLQDDSPALNEPAVGDE) are disordered.

The protein belongs to the band 7/mec-2 family.

It is found in the endoplasmic reticulum membrane. Functionally, mediates the endoplasmic reticulum-associated degradation (ERAD) of inositol 1,4,5-trisphosphate receptors (IP3Rs). Promotes sterol-accelerated ERAD of HMGCR. Involved in regulation of cellular cholesterol homeostasis by regulation the SREBP signaling pathway. The protein is Erlin-2 (erlin2) of Xenopus tropicalis (Western clawed frog).